Here is a 220-residue protein sequence, read N- to C-terminus: Guanylate kinase (220 aa).

The region spanning 11–190 (GVLFVLSSPS…CYGEVMAILR (180 aa)) is the Guanylate kinase-like domain. 18-25 (SPSGAGKT) serves as a coordination point for ATP.

It belongs to the guanylate kinase family.

It localises to the cytoplasm. The enzyme catalyses GMP + ATP = GDP + ADP. Functionally, essential for recycling GMP and indirectly, cGMP. The protein is Guanylate kinase of Sphingopyxis alaskensis (strain DSM 13593 / LMG 18877 / RB2256) (Sphingomonas alaskensis).